Consider the following 397-residue polypeptide: (S)-8-oxocitronellyl enol synthase ISY2 (397 aa).

NADP(+) contacts are provided by residues 36–38, 64–65, 82–83, 106–107, glutamine 144, tyrosine 180, isoleucine 207, and 214–216; these read TGL, RR, DV, TW, and SMM. Tyrosine 180 is an active-site residue.

The protein belongs to the short-chain dehydrogenases/reductases (SDR) family.

It carries out the reaction (S)-8-oxocitronellyl enol + NADP(+) = (6E)-8-oxogeranial + NADPH + H(+). The catalysed reaction is (S)-8-oxocitronellyl enol + NAD(+) = (6E)-8-oxogeranial + NADH + H(+). Its function is as follows. Iridoid synthase that catalyzes the first step in generation of the iridoid ring scaffold using the linear monoterpene (6E)-8-oxogeranial as substrate. Iridoids comprise a large family of distinctive bicyclic monoterpenes that possess a wide range of pharmacological activities, including anticancer, anti-inflammatory, antifungal and antibacterial activities. Catalyzes the conversion of the linear monoterpene (6E)-8-oxogeranial to (S)-8-oxocitronellyl enol, a precursor of nepetalactones, which are metabolites that are both insect-repellent and have euphoric effect in cats. This Nepeta cataria (Catnip) protein is (S)-8-oxocitronellyl enol synthase ISY2.